Here is a 319-residue protein sequence, read N- to C-terminus: Coproporphyrin III ferrochelatase 2 (319 aa).

Fe-coproporphyrin III contacts are provided by residues Y13, R30, R46–Y47, S54, and Y125. H181 and E262 together coordinate Fe(2+).

The protein belongs to the ferrochelatase family.

The protein localises to the cytoplasm. The enzyme catalyses Fe-coproporphyrin III + 2 H(+) = coproporphyrin III + Fe(2+). Its pathway is porphyrin-containing compound metabolism; protoheme biosynthesis. In terms of biological role, involved in coproporphyrin-dependent heme b biosynthesis. Catalyzes the insertion of ferrous iron into coproporphyrin III to form Fe-coproporphyrin III. The polypeptide is Coproporphyrin III ferrochelatase 2 (Bacillus anthracis).